The primary structure comprises 408 residues: Acetate kinase (408 aa).

Asn7 is a Mg(2+) binding site. Lys14 contacts ATP. Residue Arg91 participates in substrate binding. The active-site Proton donor/acceptor is Asp148. Residues 208-212 (HLGNG), 283-285 (DFR), and 331-335 (GIGEN) each bind ATP. Glu384 contributes to the Mg(2+) binding site.

This sequence belongs to the acetokinase family. As to quaternary structure, homodimer. Requires Mg(2+) as cofactor. Mn(2+) is required as a cofactor.

The protein resides in the cytoplasm. It catalyses the reaction acetate + ATP = acetyl phosphate + ADP. The protein operates within metabolic intermediate biosynthesis; acetyl-CoA biosynthesis; acetyl-CoA from acetate: step 1/2. Its function is as follows. Catalyzes the formation of acetyl phosphate from acetate and ATP. Can also catalyze the reverse reaction. This Methanosarcina barkeri (strain Fusaro / DSM 804) protein is Acetate kinase.